A 572-amino-acid chain; its full sequence is Methionine--tRNA ligase (572 aa).

The short motif at 11-21 is the 'HIGH' region element; it reads PYINGIKHLGN. Zn(2+) is bound by residues cysteine 143, cysteine 146, cysteine 156, and cysteine 159. Residues 346–350 carry the 'KMSKS' region motif; sequence QFSTS. Threonine 349 contacts ATP.

Belongs to the class-I aminoacyl-tRNA synthetase family. MetG type 1 subfamily. Monomer. It depends on Zn(2+) as a cofactor.

It localises to the cytoplasm. It catalyses the reaction tRNA(Met) + L-methionine + ATP = L-methionyl-tRNA(Met) + AMP + diphosphate. Is required not only for elongation of protein synthesis but also for the initiation of all mRNA translation through initiator tRNA(fMet) aminoacylation. The protein is Methionine--tRNA ligase of Cereibacter sphaeroides (strain ATCC 17025 / ATH 2.4.3) (Rhodobacter sphaeroides).